Here is a 274-residue protein sequence, read N- to C-terminus: Undecaprenyl-diphosphatase (274 aa).

7 helical membrane-spanning segments follow: residues 21 to 39 (FLPISSTGHLILAGALLGF), 44 to 64 (AQVFDVAIQTGAILAVILVYW), 85 to 105 (FNLAIGFFPAVLLGLLFGKAI), 109 to 129 (LFTPVVVASTFIIGGLVILWA), 185 to 205 (ATDFSFFLAIPTLIGAGVYSL), 214 to 234 (VADLPMFLTGLVFSFLSAWLC), and 247 to 267 (FVPFAYYRIGFGLMVLVTAST).

Belongs to the UppP family.

The protein localises to the cell inner membrane. The enzyme catalyses di-trans,octa-cis-undecaprenyl diphosphate + H2O = di-trans,octa-cis-undecaprenyl phosphate + phosphate + H(+). Catalyzes the dephosphorylation of undecaprenyl diphosphate (UPP). Confers resistance to bacitracin. This Verminephrobacter eiseniae (strain EF01-2) protein is Undecaprenyl-diphosphatase.